The chain runs to 260 residues: Putative ABC transporter ATP-binding protein PYRAB01300 (260 aa).

The 233-residue stretch at Ile-2–Pro-234 folds into the ABC transporter domain. Gly-34–Thr-41 provides a ligand contact to ATP.

The protein belongs to the ABC transporter superfamily.

It localises to the cell membrane. In terms of biological role, probably part of an ABC transporter complex. Responsible for energy coupling to the transport system. This chain is Putative ABC transporter ATP-binding protein PYRAB01300, found in Pyrococcus abyssi (strain GE5 / Orsay).